We begin with the raw amino-acid sequence, 581 residues long: CUE domain-containing protein 3 (581 aa).

A CUE domain is found at 271–314 (INPGDVKSLIELFPQLSVEEAVEHLSASLGNIDAACESVITSSL). The residue at position 386 (tyrosine 386) is a Phosphotyrosine. Disordered regions lie at residues 422–448 (DDTY…ASSK) and 522–581 (GSGN…SNEK). Positions 522 to 542 (GSGNTNIGSLRQTKFKQSNYT) are enriched in polar residues. A compositionally biased stretch (basic residues) spans 552-581 (QHRPSRPSKNPSLKKKKYVRTKPKKASNEK).

Component of the RQT (ribosome quality control trigger) complex.

It localises to the cytoplasm. The protein localises to the nucleus. Functionally, involved in activation of the ribosome quality control (RQC) pathway, a pathway that degrades nascent peptide chains during problematic translation. Specifically recognizes and binds RPS20/uS10 ubiquitinated by HEL2, promoting recruitment of the RQT (ribosome quality control trigger) complex on stalled ribosomes, followed by disassembly of stalled ribosomes. The polypeptide is CUE domain-containing protein 3 (Schizosaccharomyces pombe (strain 972 / ATCC 24843) (Fission yeast)).